The chain runs to 270 residues: 3-methyl-2-oxobutanoate hydroxymethyltransferase (270 aa).

Positions 41 and 80 each coordinate Mg(2+). 3-methyl-2-oxobutanoate contacts are provided by residues 41 to 42 (DS), D80, and K109. E111 serves as a coordination point for Mg(2+). E178 acts as the Proton acceptor in catalysis.

This sequence belongs to the PanB family. Homodecamer; pentamer of dimers. Mg(2+) is required as a cofactor.

It localises to the cytoplasm. The enzyme catalyses 3-methyl-2-oxobutanoate + (6R)-5,10-methylene-5,6,7,8-tetrahydrofolate + H2O = 2-dehydropantoate + (6S)-5,6,7,8-tetrahydrofolate. It functions in the pathway cofactor biosynthesis; (R)-pantothenate biosynthesis; (R)-pantoate from 3-methyl-2-oxobutanoate: step 1/2. In terms of biological role, catalyzes the reversible reaction in which hydroxymethyl group from 5,10-methylenetetrahydrofolate is transferred onto alpha-ketoisovalerate to form ketopantoate. The sequence is that of 3-methyl-2-oxobutanoate hydroxymethyltransferase from Thermotoga sp. (strain RQ2).